A 454-amino-acid chain; its full sequence is L-cysteine desulfhydrase (454 aa).

Residues 1–25 (MEAGERRNGDSMSHNHRAPKKPRLA) are disordered. The span at 14-23 (HNHRAPKKPR) shows a compositional bias: basic residues. Residue Lys-257 is modified to N6-(pyridoxal phosphate)lysine.

This sequence belongs to the class-V pyridoxal-phosphate-dependent aminotransferase family. Pyridoxal 5'-phosphate is required as a cofactor. In terms of tissue distribution, highly expressed in stems and cauline leaves, and at lower levels in roots, rosette leaves and flowers.

It carries out the reaction L-cysteine + H2O = hydrogen sulfide + pyruvate + NH4(+) + H(+). Functionally, catalyzes the production of hydrogen sulfide (H2S) from cysteine. Is mainly responsible for the degradation of cysteine to generate H2S, a regulator of stomatal movement and closure. This chain is L-cysteine desulfhydrase (LCD), found in Arabidopsis thaliana (Mouse-ear cress).